A 149-amino-acid polypeptide reads, in one-letter code: Large ribosomal subunit protein bL9 (149 aa).

Belongs to the bacterial ribosomal protein bL9 family.

Its function is as follows. Binds to the 23S rRNA. In Helicobacter pylori (strain HPAG1), this protein is Large ribosomal subunit protein bL9.